Here is a 425-residue protein sequence, read N- to C-terminus: Malate transporter MleP (425 aa).

A run of 11 helical transmembrane segments spans residues 11–31 (GISLPLYAFFVAVIIVVTLLG), 35–55 (LDMVGLTLLLVTLGHLLYFIG), 65–85 (LGGGSVFTLIGATLLSFFHIV), 96–116 (FMGGKFGFLDFYIAALICGSI), 134–154 (IALITMVIGFFSVGLVGMLIG), 196–216 (IFSQLAPAVTFGNILAIIGAL), 246–266 (IKLDAQQIGTGMLFAFALLMA), 269–289 (ILNKFFPNIHQYAFMIIIVFI), 310–330 (VIMTNLTHAVLAGIGLALIDL), 339–359 (WQFVVLCLTSVVVMGLASWFL), and 401–421 (FAQMANRLCGAIVLIFGGILI).

The protein belongs to the 2-hydroxycarboxylate transporter (2-HCT) (TC 2.A.24) family.

The protein resides in the cell membrane. The catalysed reaction is (S)-lactate(in) + (S)-malate(out) = (S)-lactate(out) + (S)-malate(in). It carries out the reaction (R)-lactate(in) + (S)-malate(out) = (R)-lactate(out) + (S)-malate(in). It catalyses the reaction glycolate(in) + (S)-malate(out) = glycolate(out) + (S)-malate(in). Functionally, secondary transporter involved in malolactic fermentation. Catalyzes the uptake of divalent malate into the cell coupled to the exit of monovalent lactate, a product of malate degradation (precursor/product exchange). The malate/lactate exchange is electrogenic and results in the generation of a membrane potential. Is highly selective for the S-enantiomer of malate. In the absence of lactate, MleP can also catalyze the proton-dependent transport of malate. In vitro, transports a range of substrates that contain the 2-hydroxycarboxylate motif, HO-CR(2)-COO(-), with a preference for malate, lactate and glycolate. Modification of the OH or the COO(-) groups of the 2-hydroxycarboxylate motif drastically reduces the affinity of the transporter for the substrates, indicating their relevance in substrate recognition. Significant activity is also observed with some 2-oxocarboxylates. Transports only poorly citromalate. Citrate binds to MleP but is not translocated. The polypeptide is Malate transporter MleP (Lactococcus lactis subsp. lactis (strain IL1403) (Streptococcus lactis)).